Reading from the N-terminus, the 135-residue chain is Lactoylglutathione lyase (135 aa).

The 125-residue stretch at 2–126 (RLLHTMLRVG…DGYKIELIEE (125 aa)) folds into the VOC domain. His5 contributes to the Ni(2+) binding site. Residue Arg9 coordinates substrate. Glu56 serves as a coordination point for Ni(2+). Substrate contacts are provided by Asn60 and His74. Positions 74 and 122 each coordinate Ni(2+). Residue Glu122 is the Proton donor/acceptor of the active site.

It belongs to the glyoxalase I family. In terms of assembly, homodimer. Requires Ni(2+) as cofactor.

The catalysed reaction is (R)-S-lactoylglutathione = methylglyoxal + glutathione. The protein operates within secondary metabolite metabolism; methylglyoxal degradation; (R)-lactate from methylglyoxal: step 1/2. Catalyzes the conversion of hemimercaptal, formed from methylglyoxal and glutathione, to S-lactoylglutathione. This chain is Lactoylglutathione lyase (gloA), found in Escherichia coli O157:H7.